The chain runs to 505 residues: Glutamate--tRNA ligase (505 aa).

Residues 12 to 22 (PSPTGDPHVGT) carry the 'HIGH' region motif. A 'KMSKS' region motif is present at residues 253–257 (KLSKR). K256 is a binding site for ATP.

The protein belongs to the class-I aminoacyl-tRNA synthetase family. Glutamate--tRNA ligase type 1 subfamily. Monomer.

The protein resides in the cytoplasm. The catalysed reaction is tRNA(Glu) + L-glutamate + ATP = L-glutamyl-tRNA(Glu) + AMP + diphosphate. In terms of biological role, catalyzes the attachment of glutamate to tRNA(Glu) in a two-step reaction: glutamate is first activated by ATP to form Glu-AMP and then transferred to the acceptor end of tRNA(Glu). The chain is Glutamate--tRNA ligase from Chlamydia caviae (strain ATCC VR-813 / DSM 19441 / 03DC25 / GPIC) (Chlamydophila caviae).